Consider the following 268-residue polypeptide: Ubiquinone/menaquinone biosynthesis C-methyltransferase UbiE (268 aa).

Positions 1-23 (MTDQHAFATEQVQLDPTLSPTTE) are disordered. Polar residues predominate over residues 10-23 (EQVQLDPTLSPTTE). Residues T91, D112, 140 to 141 (NA), and S157 contribute to the S-adenosyl-L-methionine site.

Belongs to the class I-like SAM-binding methyltransferase superfamily. MenG/UbiE family.

The enzyme catalyses a 2-demethylmenaquinol + S-adenosyl-L-methionine = a menaquinol + S-adenosyl-L-homocysteine + H(+). The catalysed reaction is a 2-methoxy-6-(all-trans-polyprenyl)benzene-1,4-diol + S-adenosyl-L-methionine = a 5-methoxy-2-methyl-3-(all-trans-polyprenyl)benzene-1,4-diol + S-adenosyl-L-homocysteine + H(+). It functions in the pathway quinol/quinone metabolism; menaquinone biosynthesis; menaquinol from 1,4-dihydroxy-2-naphthoate: step 2/2. It participates in cofactor biosynthesis; ubiquinone biosynthesis. Functionally, methyltransferase required for the conversion of demethylmenaquinol (DMKH2) to menaquinol (MKH2) and the conversion of 2-polyprenyl-6-methoxy-1,4-benzoquinol (DDMQH2) to 2-polyprenyl-3-methyl-6-methoxy-1,4-benzoquinol (DMQH2). The polypeptide is Ubiquinone/menaquinone biosynthesis C-methyltransferase UbiE (Pasteurella multocida (strain Pm70)).